The chain runs to 107 residues: Proteinase inhibitor I-B (107 aa).

Positions Met1–Ala22 are cleaved as a signal peptide. A propeptide spanning residues Arg23–Cys39 is cleaved from the precursor.

Belongs to the protease inhibitor I13 (potato type I serine protease inhibitor) family.

It localises to the secreted. This chain is Proteinase inhibitor I-B (TIMPA), found in Nicotiana tabacum (Common tobacco).